The chain runs to 40 residues: DCPSDWSSYDEHCYRVFQQKMNWEDAEKFCTQQHKGXHLX.

An intrachain disulfide couples cysteine 2 to cysteine 13. The region spanning 9 to 40 (YDEHCYRVFQQKMNWEDAEKFCTQQHKGXHLX) is the C-type lectin domain.

Belongs to the snaclec family. In terms of assembly, heterodimer of subunits alpha and beta; disulfide-linked. Expressed by the venom gland.

The protein resides in the secreted. In terms of biological role, platelet antagonist that specifically and reversibly binds to a site on platelet glycoprotein Ibalpha (GP1BA) close to or identical with the site for vWF binding. It inhibits the binding of vWF to platelets and vWF-dependent shear-induced platelet aggregation. This Protobothrops tokarensis (Tokara habu) protein is Snaclec tokaracetin subunit beta.